We begin with the raw amino-acid sequence, 443 residues long: Threonine/serine transporter TdcC (443 aa).

Transmembrane regions (helical) follow at residues 24 to 44 (WVLG…PISA), 45 to 65 (GIGG…IAFF), 95 to 115 (VGGV…LWIY), 140 to 160 (VVAL…KDLM), 163 to 183 (VMGY…LSLI), 207 to 227 (ILVT…FSPI), 259 to 279 (ASVL…FTLS), 319 to 339 (ASII…LGTL), 363 to 383 (LNMI…YINP), 385 to 405 (ILDL…CLLP), and 423 to 443 (SNYF…YQLM).

It belongs to the amino acid/polyamine transporter 2 family. SdaC/TdcC subfamily.

The protein resides in the cell inner membrane. The catalysed reaction is L-threonine(in) + H(+)(in) = L-threonine(out) + H(+)(out). The enzyme catalyses L-serine(in) + H(+)(in) = L-serine(out) + H(+)(out). Functionally, involved in the import of threonine and serine into the cell, with the concomitant import of a proton (symport system). This Edwardsiella piscicida protein is Threonine/serine transporter TdcC.